The following is a 394-amino-acid chain: 4-O-methyl-glucuronoyl methylesterase (394 aa).

Residues 1–18 (MVHLTPALLLASAAFAAA) form the signal peptide. Cystine bridges form between Cys-29-Cys-63, Cys-210-Cys-345, and Cys-242-Cys-317. The short motif at 209–214 (GCSRNG) is the GXSYXG catalytic site motif element. Catalysis depends on Ser-211, which acts as the Nucleophile. Positions 215, 257, 265, and 308 each coordinate substrate. Catalysis depends on His-344, which acts as the Proton donor/acceptor.

The protein belongs to the carbohydrate esterase 15 (CE15) family.

It is found in the secreted. It carries out the reaction a 4-O-methyl-alpha-D-glucuronosyl ester derivative + H2O = 4-O-methyl-alpha-D-glucuronate derivative + an alcohol + H(+). Glucuronoyl esterase which may play a significant role in biomass degradation, as it is considered to disconnect hemicellulose from lignin through the hydrolysis of the ester bond between 4-O-methyl-D-glucuronic acid residues of glucuronoxylans and aromatic alcohols of lignin. The polypeptide is 4-O-methyl-glucuronoyl methylesterase (Neurospora crassa (strain ATCC 24698 / 74-OR23-1A / CBS 708.71 / DSM 1257 / FGSC 987)).